We begin with the raw amino-acid sequence, 253 residues long: Probable transcriptional regulatory protein Hore_12350 (253 aa).

A disordered region spans residues 1–21; the sequence is MAGHSKWANIKHKKAKEDRKR.

This sequence belongs to the TACO1 family.

The protein resides in the cytoplasm. This is Probable transcriptional regulatory protein Hore_12350 from Halothermothrix orenii (strain H 168 / OCM 544 / DSM 9562).